We begin with the raw amino-acid sequence, 448 residues long: Nucleoprotein (448 aa).

Residues 1–55 form a disordered region; it reads MSFTPGKQSSSRASSGNRSGNGILKWADQSDQSRNVQTRGRRAQPKQTATSQQPS. Residues 9-22 are compositionally biased toward low complexity; that stretch reads SSSRASSGNRSGNG. Polar residues-rich tracts occupy residues 29-38 and 45-55; these read QSDQSRNVQT and PKQTATSQQPS. Residues 52-194 are RNA-binding; it reads QQPSGGNVVP…GYYIEGSGRS (143 aa). The region spanning 61 to 190 is the CoV N NTD domain; it reads PYYSWFSGIT…VLPQGYYIEG (130 aa). Positions 106, 122, and 164 each coordinate RNA. Disordered stretches follow at residues 157–231, 266–298, and 385–448; these read TPAD…VTPD, ILNK…FGGG, and GMMN…TSEI. The residue at position 167 (Ser-167) is a Phosphoserine; by host. At Thr-174 the chain carries Phosphothreonine; by host. Ser-191 bears the Phosphoserine; by host mark. Residues 193-214 are compositionally biased toward low complexity; that stretch reads RSAPNSRSTSRASSRASSAGSR. Residues 259–384 form the CoV N CTD domain; it reads AKEIRQKILN…ENLNAYQQQD (126 aa). Residues 266–276 show a composition bias toward basic residues; that stretch reads ILNKPRQKRSP. The tract at residues 266–384 is dimerization; it reads ILNKPRQKRS…ENLNAYQQQD (119 aa). At Ser-390 the chain carries Phosphoserine; by host. The segment covering 399 to 409 has biased composition (polar residues); that stretch reads QKNGQGENDNI. Over residues 422-439 the composition is skewed to basic and acidic residues; sequence KSRELTAEDISLLKKMDE. Residue Ser-423 is modified to Phosphoserine; by host. Thr-427 carries the post-translational modification Phosphothreonine; by host.

This sequence belongs to the betacoronavirus nucleocapsid protein family. As to quaternary structure, homooligomer. Both monomeric and oligomeric forms interact with RNA. Interacts with protein M. Interacts with NSP3; this interaction serves to tether the genome to the newly translated replicase-transcriptase complex at a very early stage of infection. ADP-ribosylated. The ADP-ribosylation is retained in the virion during infection. Post-translationally, phosphorylated on serine and threonine residues.

The protein localises to the virion. Its subcellular location is the host endoplasmic reticulum-Golgi intermediate compartment. The protein resides in the host Golgi apparatus. Its function is as follows. Packages the positive strand viral genome RNA into a helical ribonucleocapsid (RNP) and plays a fundamental role during virion assembly through its interactions with the viral genome and membrane protein M. Plays an important role in enhancing the efficiency of subgenomic viral RNA transcription as well as viral replication. The sequence is that of Nucleoprotein from Bovine coronavirus (strain LY-138) (BCoV).